The chain runs to 693 residues: ATP-dependent DNA helicase RecG (693 aa).

Residues 48–146 (THLYPIGELL…GDLSTPELQE (99 aa)) form a wedge domain region. A Helicase ATP-binding domain is found at 283 to 448 (DMALDVPMMR…AYADLDTSVI (166 aa)). 296-303 (GDVGSGKT) provides a ligand contact to ATP. The DEAH box motif lies at 397-400 (DEQH). The region spanning 482–628 (EGRQAYWVCT…GFVIAQKDLE (147 aa)) is the Helicase C-terminal domain.

The protein belongs to the helicase family. RecG subfamily. Monomer.

It carries out the reaction Couples ATP hydrolysis with the unwinding of duplex DNA by translocating in the 3'-5' direction.. It catalyses the reaction ATP + H2O = ADP + phosphate + H(+). Functionally, plays a critical role in recombination and DNA repair. Helps process Holliday junction intermediates to mature products by catalyzing branch migration. Has replication fork regression activity, unwinds stalled or blocked replication forks to make a HJ that can be resolved. Has a DNA unwinding activity characteristic of a DNA helicase with 3'-5' polarity. Plays a role in recovery after DNA ADP-ribosylation. The protein is ATP-dependent DNA helicase RecG of Escherichia coli O127:H6 (strain E2348/69 / EPEC).